Reading from the N-terminus, the 62-residue chain is Paralithocin 1 (62 aa).

An N-terminal signal peptide occupies residues 1 to 23; it reads MGPMKVLLVLLVVMVAAPHIADA. Intrachain disulfides connect cysteine 29/cysteine 55, cysteine 33/cysteine 51, cysteine 37/cysteine 49, and cysteine 42/cysteine 52. Position 61 is a tyrosine amide; partial (tyrosine 61).

This sequence belongs to the paralithocin family. Post-translationally, the amidated form is probably the active form.

In terms of biological role, has weak antibacterial activity, mainly against marine Gram-positive bacteria like C.maltaromaticum (MIC=200 uM), C.mobile (MIC=100 uM), C.divergens (MIC=200 uM) and C.funditum (MIC=200 uM) but also against C.glutamicum (MIC=50 uM). Has very little or no activity against Gram-negative bacteria. This Paralithodes camtschaticus (Red king crab) protein is Paralithocin 1.